The primary structure comprises 190 residues: Translation initiation factor IF-3 (190 aa).

Belongs to the IF-3 family. In terms of assembly, monomer.

The protein resides in the cytoplasm. IF-3 binds to the 30S ribosomal subunit and shifts the equilibrium between 70S ribosomes and their 50S and 30S subunits in favor of the free subunits, thus enhancing the availability of 30S subunits on which protein synthesis initiation begins. The chain is Translation initiation factor IF-3 from Prochlorococcus marinus subsp. pastoris (strain CCMP1986 / NIES-2087 / MED4).